A 146-amino-acid polypeptide reads, in one-letter code: Hemoglobin subunit beta (146 aa).

A Globin domain is found at 2–146 (HWSAEEKQLI…VAHALARKYH (145 aa)). The heme b site is built by H63 and H92.

It belongs to the globin family. Heterotetramer of two alpha chains and two beta chains. As to expression, red blood cells.

Its function is as follows. Involved in oxygen transport from the lung to the various peripheral tissues. This is Hemoglobin subunit beta (HBB) from Stercorarius maccormicki (South polar skua).